The chain runs to 157 residues: Transcription elongation factor GreA (157 aa).

Belongs to the GreA/GreB family.

In terms of biological role, necessary for efficient RNA polymerase transcription elongation past template-encoded arresting sites. The arresting sites in DNA have the property of trapping a certain fraction of elongating RNA polymerases that pass through, resulting in locked ternary complexes. Cleavage of the nascent transcript by cleavage factors such as GreA or GreB allows the resumption of elongation from the new 3'terminus. GreA releases sequences of 2 to 3 nucleotides. This Brucella anthropi (strain ATCC 49188 / DSM 6882 / CCUG 24695 / JCM 21032 / LMG 3331 / NBRC 15819 / NCTC 12168 / Alc 37) (Ochrobactrum anthropi) protein is Transcription elongation factor GreA.